The following is a 278-amino-acid chain: S-formylglutathione hydrolase YeiG (278 aa).

Residues Ser-145, Asp-223, and His-256 each act as charge relay system in the active site.

Belongs to the esterase D family.

It carries out the reaction S-formylglutathione + H2O = formate + glutathione + H(+). Its function is as follows. Serine hydrolase involved in the detoxification of formaldehyde. Hydrolyzes S-formylglutathione to glutathione and formate. This chain is S-formylglutathione hydrolase YeiG (yeiG), found in Escherichia coli (strain SMS-3-5 / SECEC).